The chain runs to 430 residues: Aspartate aminotransferase, mitochondrial (430 aa).

Residues 1 to 29 (MALLHSGRALPGIAAAFHPGLAAAASARA) constitute a mitochondrion transit peptide. Thr48 carries the phosphothreonine modification. An N6-acetyllysine modification is found at Lys59. Residue Gly65 participates in substrate binding. Residue Lys73 is modified to N6-acetyllysine; alternate. Lys73 is subject to N6-succinyllysine; alternate. Lys82 is subject to N6-acetyllysine. Residue Lys90 is modified to N6-acetyllysine; alternate. The residue at position 90 (Lys90) is an N6-succinyllysine; alternate. At Tyr96 the chain carries 3'-nitrotyrosine; alternate. Phosphotyrosine; alternate is present on Tyr96. Lys107 and Lys122 each carry N6-acetyllysine; alternate. N6-succinyllysine; alternate occurs at positions 107 and 122. Residue Ser143 is modified to Phosphoserine. Lys159 is subject to N6-acetyllysine; alternate. Position 159 is an N6-succinyllysine; alternate (Lys159). Trp162 is a substrate binding site. Lys185 carries the N6-acetyllysine; alternate modification. Lys185 bears the N6-succinyllysine; alternate mark. Asn215 is a binding site for substrate. Residue Lys227 is modified to N6-succinyllysine. The residue at position 234 (Lys234) is an N6-acetyllysine. Residues Lys279 and Lys296 each carry the N6-acetyllysine; alternate modification. Lys279 is subject to N6-(pyridoxal phosphate)lysine; alternate. N6-succinyllysine; alternate is present on Lys296. Lys302 carries the N6-acetyllysine modification. At Lys309 the chain carries N6-acetyllysine; alternate. At Lys309 the chain carries N6-succinyllysine; alternate. Residue Arg313 is modified to Asymmetric dimethylarginine. Thr333 is subject to Phosphothreonine. Lys338 carries the post-translational modification N6-acetyllysine; alternate. At Lys338 the chain carries N6-succinyllysine; alternate. N6-acetyllysine is present on Lys345. The residue at position 363 (Lys363) is an N6-acetyllysine; alternate. Lys363 carries the post-translational modification N6-succinyllysine; alternate. An N6-acetyllysine mark is found at Lys364 and Lys387. Residues Lys396 and Lys404 each carry the N6-acetyllysine; alternate modification. 2 positions are modified to N6-succinyllysine; alternate: Lys396 and Lys404. Residue Arg407 participates in substrate binding.

Belongs to the class-I pyridoxal-phosphate-dependent aminotransferase family. Homodimer. Requires pyridoxal 5'-phosphate as cofactor.

The protein resides in the mitochondrion matrix. It localises to the cell membrane. The enzyme catalyses L-aspartate + 2-oxoglutarate = oxaloacetate + L-glutamate. It catalyses the reaction L-kynurenine + 2-oxoglutarate = kynurenate + L-glutamate + H2O. Catalyzes the irreversible transamination of the L-tryptophan metabolite L-kynurenine to form kynurenic acid (KA). As a member of the malate-aspartate shuttle, it has a key role in the intracellular NAD(H) redox balance. Is important for metabolite exchange between mitochondria and cytosol, and for amino acid metabolism. Facilitates cellular uptake of long-chain free fatty acids. This is Aspartate aminotransferase, mitochondrial (GOT2) from Pongo abelii (Sumatran orangutan).